The sequence spans 378 residues: Filamin-binding LIM protein 1 (378 aa).

Residues 1 to 69 form a filamin-binding region; the sequence is MASKPEKRVA…RSWMPPGRAA (69 aa). The tract at residues 38-179 is disordered; the sequence is WPGRPWESAP…PPPEEPVSFP (142 aa). The span at 103-115 shows a compositional bias: pro residues; sequence LPPPPPPPAADLP. 3 LIM zinc-binding domains span residues 186–247, 248–305, and 306–375; these read DICA…TLEK, CGKC…RKFA, and PVCS…RSAA. The segment at 281-378 is PLEKHC1-binding; that stretch reads IGDESFALDS…HVKRSAAGCC (98 aa).

As to quaternary structure, interacts with PLEKHC1, FLNA, FLNB and FLNC. Interacts with NKX2-5.

It localises to the cell junction. The protein localises to the focal adhesion. The protein resides in the cytoplasm. It is found in the cytoskeleton. Its subcellular location is the stress fiber. Serves as an anchoring site for cell-ECM adhesion proteins and filamin-containing actin filaments. Is implicated in cell shape modulation (spreading) and motility. May participate in the regulation of filamin-mediated cross-linking and stabilization of actin filaments. May also regulate the assembly of filamin-containing signaling complexes that control actin assembly. Promotes dissociation of FLNA from ITGB3 and ITGB7. Promotes activation of integrins and regulates integrin-mediated cell-cell adhesion. In Bos taurus (Bovine), this protein is Filamin-binding LIM protein 1 (FBLIM1).